The chain runs to 698 residues: Ion-translocating oxidoreductase complex subunit C (698 aa).

4Fe-4S ferredoxin-type domains are found at residues 366–397 (TEMG…QQLY) and 407–436 (KARN…VQYY). The [4Fe-4S] cluster site is built by Cys377, Cys380, Cys383, Cys387, Cys416, Cys419, Cys422, and Cys426.

This sequence belongs to the 4Fe4S bacterial-type ferredoxin family. RnfC subfamily. In terms of assembly, the complex is composed of six subunits: RnfA, RnfB, RnfC, RnfD, RnfE and RnfG. [4Fe-4S] cluster serves as cofactor.

It is found in the cell inner membrane. Functionally, part of a membrane-bound complex that couples electron transfer with translocation of ions across the membrane. This is Ion-translocating oxidoreductase complex subunit C from Yersinia pseudotuberculosis serotype O:3 (strain YPIII).